The sequence spans 764 residues: Palmitoyltransferase AKR1 (764 aa).

Disordered regions lie at residues 1-38 (MVNELENVPRASTLTNEEQTVDPSNNDSQEDISLGDSN) and 51-71 (SGNEEESGNEQVNHNDEAEED). Over 1–321 (MVNELENVPR…IKKWFKKSQH (321 aa)) the chain is Cytoplasmic. Residues 10–27 (RASTLTNEEQTVDPSNND) are compositionally biased toward polar residues. A phosphoserine mark is found at serine 51 and serine 57. ANK repeat units lie at residues 72–102 (PLLTRYHTACQRGDLATVKEMIHGKLLEVNN), 108–137 (EHITGLHWASINNRLSVVDFLVSQGADVNA), 142–171 (LHATPLHWAARYGYVYIVDFLLKHGADPTM), 175–204 (QGFNLLHLSVNSSNIMLVLYVLFNVVSKGL), 213–242 (KGRTSLLWAAYQGDSLTVAELLKFGASIKI), and 246–275 (EGFTPLHWGTVKGQPHVLKYLIQDGADFFQ). The helical transmembrane segment at 322-341 (AKLVTFITPFLFLGIAFALF) threads the bilayer. Topologically, residues 342–346 (SHINP) are lumenal. The helical transmembrane segment at 347–364 (LFVIIVLFLLAIATNKGL) threads the bilayer. Residues 365–384 (NKFVLPSYGRMGVHNVTLLR) are Cytoplasmic-facing. The helical transmembrane segment at 385–405 (SPLLSGVFFGTLLWVTIVWFF) threads the bilayer. Residues 406-418 (KVMPRTFSDEQYT) lie on the Lumenal side of the membrane. Residues 419 to 439 (NILMLVILVSVFYLFGQLVIM) form a helical membrane-spanning segment. Residues 440-513 (DPGCLPEETD…FNDVGLKNHK (74 aa)) are Cytoplasmic-facing. A DHHC domain is found at 470–520 (NFCIETWIRKPLRSKFSPLNNAVVARFDHYCPWIFNDVGLKNHKAFIFFIT). Residue cysteine 500 is the S-palmitoyl cysteine intermediate of the active site. The helical transmembrane segment at 514 to 534 (AFIFFITLMESGIFTFLALCL) threads the bilayer. The Lumenal segment spans residues 535–570 (EYFDELEDAHEDTSQKNGKCFILGASDLCSGLIYDR). A helical transmembrane segment spans residues 571–591 (FVFLILLWALLQSIWVASLIF). Topologically, residues 592 to 764 (VQAFQICKGM…KDVEQGNDMV (173 aa)) are cytoplasmic.

It belongs to the DHHC palmitoyltransferase family. AKR/ZDHHC17 subfamily.

It is found in the early endosome membrane. Its subcellular location is the golgi apparatus membrane. It carries out the reaction L-cysteinyl-[protein] + hexadecanoyl-CoA = S-hexadecanoyl-L-cysteinyl-[protein] + CoA. Its function is as follows. Palmitoyltransferase specific for casein kinase 1. Palmitoylates isoforms YCK1 and YCK2 at both C-terminal cysteine residues, which is required for their proper plasma membrane localization. Required for constitutive endocytosis of a-factor receptor STE3 and both constitutive and pheromone-induced endocytosis of alpha-factor receptor STE2. This chain is Palmitoyltransferase AKR1 (AKR1), found in Saccharomyces cerevisiae (strain ATCC 204508 / S288c) (Baker's yeast).